Here is a 207-residue protein sequence, read N- to C-terminus: N-(5'-phosphoribosyl)anthranilate isomerase (207 aa).

It belongs to the TrpF family.

It carries out the reaction N-(5-phospho-beta-D-ribosyl)anthranilate = 1-(2-carboxyphenylamino)-1-deoxy-D-ribulose 5-phosphate. It participates in amino-acid biosynthesis; L-tryptophan biosynthesis; L-tryptophan from chorismate: step 3/5. This Staphylococcus epidermidis (strain ATCC 35984 / DSM 28319 / BCRC 17069 / CCUG 31568 / BM 3577 / RP62A) protein is N-(5'-phosphoribosyl)anthranilate isomerase.